Reading from the N-terminus, the 152-residue chain is SsrA-binding protein (152 aa).

Belongs to the SmpB family.

The protein localises to the cytoplasm. Functionally, required for rescue of stalled ribosomes mediated by trans-translation. Binds to transfer-messenger RNA (tmRNA), required for stable association of tmRNA with ribosomes. tmRNA and SmpB together mimic tRNA shape, replacing the anticodon stem-loop with SmpB. tmRNA is encoded by the ssrA gene; the 2 termini fold to resemble tRNA(Ala) and it encodes a 'tag peptide', a short internal open reading frame. During trans-translation Ala-aminoacylated tmRNA acts like a tRNA, entering the A-site of stalled ribosomes, displacing the stalled mRNA. The ribosome then switches to translate the ORF on the tmRNA; the nascent peptide is terminated with the 'tag peptide' encoded by the tmRNA and targeted for degradation. The ribosome is freed to recommence translation, which seems to be the essential function of trans-translation. In Sulfurihydrogenibium sp. (strain YO3AOP1), this protein is SsrA-binding protein.